Here is a 347-residue protein sequence, read N- to C-terminus: Heme A synthase (347 aa).

Helical transmembrane passes span 14–34 (VKVW…VGGI), 95–115 (YFHR…FLYF), 125–145 (LIVN…MGWL), 166–186 (LLLA…AVIL), 198–218 (LIFY…SLVA), 260–280 (FIHE…LLIL), 289–309 (LLLV…IYNV), and 311–331 (IALA…NTYL). Heme is bound at residue His262. His317 lines the heme pocket.

The protein belongs to the COX15/CtaA family. Type 2 subfamily. Interacts with CtaB. Heme b is required as a cofactor.

Its subcellular location is the cell membrane. It catalyses the reaction Fe(II)-heme o + 2 A + H2O = Fe(II)-heme a + 2 AH2. Its pathway is porphyrin-containing compound metabolism; heme A biosynthesis; heme A from heme O: step 1/1. Its function is as follows. Catalyzes the conversion of heme O to heme A by two successive hydroxylations of the methyl group at C8. The first hydroxylation forms heme I, the second hydroxylation results in an unstable dihydroxymethyl group, which spontaneously dehydrates, resulting in the formyl group of heme A. The sequence is that of Heme A synthase from Ehrlichia canis (strain Jake).